A 399-amino-acid polypeptide reads, in one-letter code: Subtilisin-like protease CPC735_033790 (399 aa).

An N-terminal signal peptide occupies residues 1–20 (MGFLSSAILLLITAFPAAQA). The propeptide occupies 21-117 (GEMINAAAGA…VEPDRMVNIT (97 aa)). In terms of domain architecture, Inhibitor I9 spans 37–116 (SYIVVMNEGI…YVEPDRMVNI (80 aa)). A glycan (N-linked (GlcNAc...) asparagine) is linked at N115. In terms of domain architecture, Peptidase S8 spans 127–399 (SYGLGRISNK…NRLLYNNSGV (273 aa)). Catalysis depends on charge relay system residues D159 and H190. A glycan (N-linked (GlcNAc...) asparagine) is linked at N251. S345 (charge relay system) is an active-site residue. N395 carries an N-linked (GlcNAc...) asparagine glycan.

This sequence belongs to the peptidase S8 family.

The protein localises to the secreted. Secreted subtilisin-like serine protease with keratinolytic activity that contributes to pathogenicity. In Coccidioides posadasii (strain C735) (Valley fever fungus), this protein is Subtilisin-like protease CPC735_033790.